Reading from the N-terminus, the 277-residue chain is Caspase-6 (277 aa).

A propeptide spanning residues 1-5 is cleaved from the precursor; that stretch reads MTETD. A tri-arginine exosite region spans residues 25 to 27; that stretch reads KRR. The residue at position 62 (serine 62) is a Phosphoserine. Histidine 104 is an active-site residue. The tract at residues 108–125 is 130's region; sequence NHIYAYDAKIEIQTLTGL. Cysteine 146 is an active-site residue. A propeptide spanning residues 163 to 176 is cleaved from the precursor; sequence HQTDKLDDNVTQVD. Serine 240 carries the phosphoserine modification. S-palmitoyl cysteine attachment occurs at residues cysteine 247 and cysteine 260.

The protein belongs to the peptidase C14A family. As to quaternary structure, heterotetramer that consists of two anti-parallel arranged heterodimers, each one formed by a 18 kDa (p18) and a 11 kDa (p11) subunits. Interacts with BIRC6/bruce. Interacts with RIPK3. Heterotetramer that consists of two anti-parallel arranged heterodimers, each one formed by a 18 kDa (Caspase-6 subunit p18) and a 11 kDa (Caspase-6 subunit p11) subunit. Post-translationally, phosphorylated by NUAK1; phosphorylation inhibits self-activation. Phosphorylation at Ser-240 by AMP-activated protein kinase (PRKAA1 or PRKAA2) inhibits autocleavage, preventing caspase activation, thereby preventing hepatocyte apoptosis. In terms of processing, palmitoylation by ZDHHC17 blocks dimerization and subsequent activation, leading to inhibit the cysteine protease activity. Can be cleaved and activated by different caspases, depending on the context. Cleaved and activated by caspase-8 (CASP8) and subsequently by caspase-3 (CASP3). Can also undergo autoactivation by mediating autocleavage at Asp-162 and Asp-176, while it is not able to cleave its N-terminal disordered prodomain. Cleaved and activated by CASP1, possibly in the context of inflammation.

It is found in the cytoplasm. The protein resides in the nucleus. It carries out the reaction Strict requirement for Asp at position P1 and has a preferred cleavage sequence of Val-Glu-His-Asp-|-.. With respect to regulation, during activation, the N-terminal disordered prodomain is removed by cleavage. Concomitantly, double cleavage gives rise to a large 18-kDa and a small 11-kDa subunit. The two large and two small subunits then assemble to form the active CASP6 complex. Can be cleaved and activated by different caspases, depending on the context. Cleaved and activated by caspase-8 (CASP8) and subsequently by caspase-3 (CASP3). Can also undergo autoactivation by mediating autocleavage at Asp-162 and Asp-176, while it is not able to cleave its N-terminal disordered prodomain. Intramolecular cleavage at Asp-176 is a prerequisite for CASP6 self-activation. Cleaved and activated by CASP1 in neurons, possibly in the context of inflammation. Phosphorylation at Ser-240 inhibits autocleavage, preventing caspase activation. In terms of biological role, cysteine protease that plays essential roles in programmed cell death, axonal degeneration, development and innate immunity. Acts as a non-canonical executioner caspase during apoptosis: localizes in the nucleus and cleaves the nuclear structural protein NUMA1 and lamin A/LMNA thereby inducing nuclear shrinkage and fragmentation. Lamin-A/LMNA cleavage is required for chromatin condensation and nuclear disassembly during apoptotic execution. Acts as a regulator of liver damage by promoting hepatocyte apoptosis: in absence of phosphorylation by AMP-activated protein kinase (AMPK), catalyzes cleavage of BID, leading to cytochrome c release, thereby participating in nonalcoholic steatohepatitis. Cleaves PARK7/DJ-1 in cells undergoing apoptosis. Involved in intrinsic apoptosis by mediating cleavage of RIPK1. Furthermore, cleaves many transcription factors such as NF-kappa-B and cAMP response element-binding protein/CREBBP. Cleaves phospholipid scramblase proteins XKR4 and XKR9. In addition to apoptosis, involved in different forms of programmed cell death. Plays an essential role in defense against viruses by acting as a central mediator of the ZBP1-mediated pyroptosis, apoptosis, and necroptosis (PANoptosis), independently of its cysteine protease activity. PANoptosis is a unique inflammatory programmed cell death, which provides a molecular scaffold that allows the interactions and activation of machinery required for inflammasome/pyroptosis, apoptosis and necroptosis. Mechanistically, interacts with RIPK3 and enhances the interaction between RIPK3 and ZBP1, leading to ZBP1-mediated inflammasome activation and cell death. Plays an essential role in axon degeneration during axon pruning which is the remodeling of axons during neurogenesis but not apoptosis. Regulates B-cell programs both during early development and after antigen stimulation. In Rattus norvegicus (Rat), this protein is Caspase-6.